Here is a 159-residue protein sequence, read N- to C-terminus: MNFLVVIVTTVSLAGAASAGEIQNLYQFGKMVMCLGNLNVLEGLEYNGYGCYCGRGGKGTPLDDTDRCCKQHDECYERATDEMGCWSIETYATTYDYTKSKVSGKCTIKCKLESDYSRFTIRKKCKAFICECDRIGAQCFADKRSTFNRSLISYTKDKC.

A signal peptide spans methionine 1–alanine 19. The propeptide occupies glycine 20–glutamine 23. Cystine bridges form between cysteine 51/cysteine 159, cysteine 53/cysteine 69, cysteine 68/cysteine 139, cysteine 75/cysteine 132, cysteine 85/cysteine 125, and cysteine 110/cysteine 130. 3 residues coordinate Ca(2+): tyrosine 52, glycine 54, and glycine 56. The active site involves histidine 72. Aspartate 73 serves as a coordination point for Ca(2+). The active site involves aspartate 133.

The protein belongs to the phospholipase A2 family. Group I subfamily. Homodimer. It depends on Ca(2+) as a cofactor. In terms of tissue distribution, expressed by the venom gland.

It is found in the secreted. It catalyses the reaction a 1,2-diacyl-sn-glycero-3-phosphocholine + H2O = a 1-acyl-sn-glycero-3-phosphocholine + a fatty acid + H(+). Its function is as follows. Starfish phospholipase A2 (PLA2) that has hemorrhagic and capillary permeability-increasing activities and hence is considered to be deeply involved in the local inflammation. Shows hemolytic activity only in the presence of phosphatidylcholine (PC). PLA2 catalyzes the calcium-dependent hydrolysis of the 2-acyl groups in 3-sn-phosphoglycerides. The polypeptide is Phospholipase A2 AP-PLA2-I (Acanthaster planci (Crown-of-thorns starfish)).